Consider the following 931-residue polypeptide: Protocadherin gamma-A5 (931 aa).

The signal sequence occupies residues 1–29 (MASPPRGWGCGELLLPFMLLGTLCEPGSG). Cadherin domains follow at residues 30 to 133 (QIRY…FPRF), 134 to 242 (RDEE…APLF), 243 to 347 (TPSE…APEV), 348 to 452 (ILTS…PPNF), 453 to 562 (PQAS…TPEI), and 570 to 683 (DGST…TPID). Residues 30 to 692 (QIRYSMPEEL…DPEDLDLTLY (663 aa)) lie on the Extracellular side of the membrane. 2 N-linked (GlcNAc...) asparagine glycosylation sites follow: Asn419 and Asn545. A helical transmembrane segment spans residues 693–713 (LVVAVAAVSCVFLAFVIVLLV). Topologically, residues 714–931 (LRLRRWHKSR…KKKSGKKEKK (218 aa)) are cytoplasmic. Disordered regions lie at residues 800–840 (NKEE…WPNN) and 901–931 (ATLT…KEKK). Polar residues predominate over residues 809 to 840 (APPNTDWRFSQAQRPGTSGSQNGDDTGTWPNN). Positions 921-931 (NKKKSGKKEKK) are enriched in basic residues.

The protein resides in the cell membrane. Functionally, potential calcium-dependent cell-adhesion protein. May be involved in the establishment and maintenance of specific neuronal connections in the brain. The polypeptide is Protocadherin gamma-A5 (PCDHGA5) (Homo sapiens (Human)).